Here is a 215-residue protein sequence, read N- to C-terminus: Cytochrome b6 (215 aa).

A helical transmembrane segment spans residues 32-52 (IFYCLGGITLTCFLIQFATGF). Residue cysteine 35 participates in heme c binding. Residues histidine 86 and histidine 100 each coordinate heme b. 3 helical membrane passes run 90 to 110 (ASMM…TGGF), 116 to 136 (LTWV…VTGY), and 186 to 206 (LHTF…FLMI). Residues histidine 187 and histidine 202 each coordinate heme b.

It belongs to the cytochrome b family. PetB subfamily. In terms of assembly, the 4 large subunits of the cytochrome b6-f complex are cytochrome b6, subunit IV (17 kDa polypeptide, PetD), cytochrome f and the Rieske protein, while the 4 small subunits are PetG, PetL, PetM and PetN. The complex functions as a dimer. The cofactor is heme b. Heme c is required as a cofactor.

The protein resides in the cellular thylakoid membrane. Component of the cytochrome b6-f complex, which mediates electron transfer between photosystem II (PSII) and photosystem I (PSI), cyclic electron flow around PSI, and state transitions. The protein is Cytochrome b6 of Synechococcus elongatus (strain ATCC 33912 / PCC 7942 / FACHB-805) (Anacystis nidulans R2).